The chain runs to 444 residues: Cell division cycle 20.4, cofactor of APC complex (444 aa).

The span at 88 to 99 (LLSTNHSDSPHQ) shows a compositional bias: polar residues. Residues 88–108 (LLSTNHSDSPHQNPKPVKPRR) are disordered. WD repeat units lie at residues 124-161 (RDDFSLNLLDWGSANVLAIALGDTVYLWDASSGSTSEL), 166-205 (EDKGPVTSINWTQDGLDLAVGLDNSEVQLWDCVSNRQVRT), 209-246 (GHESRVGSLAWDNHILTTGGMDGKIVNNDVRIRSSIVE), 250-289 (GHTEEVCGLKWSESGNKQASGGNDNVVHIWDRSLASSKQT), 298-340 (EHTA…CLNS), 342-383 (ETGS…KMAE), and 386-425 (GHTSRVLFMAQSPNGCTVASAAGDENLRLWNVFGEPPKTT).

The protein belongs to the WD repeat CDC20/Fizzy family. As to quaternary structure, the APC/C is composed of at least 11 subunits that stay tightly associated throughout the cell cycle.

It localises to the cytoplasm. Its pathway is protein modification; protein ubiquitination. Its function is as follows. Component of the anaphase promoting complex/cyclosome (APC/C), a cell cycle-regulated E3 ubiquitin-protein ligase complex that controls progression through mitosis and the G1 phase of the cell cycle. In Arabidopsis thaliana (Mouse-ear cress), this protein is Cell division cycle 20.4, cofactor of APC complex (CDC20-4).